The chain runs to 545 residues: Oligopeptide-binding protein OppA (545 aa).

The N-terminal stretch at Met-1–Ala-20 is a signal peptide. Cys-21 is lipidated: N-palmitoyl cysteine. A lipid anchor (S-diacylglycerol cysteine) is attached at Cys-21. Thr-470 carries the phosphothreonine modification.

Belongs to the bacterial solute-binding protein 5 family. In terms of assembly, the complex is composed of two ATP-binding proteins (OppD and OppF), two transmembrane proteins (OppB and OppC) and a solute-binding protein (OppA). OppA interacts with FloT in detergent-resistant membranes (DRM). Colocalizes rarely with FloT membrane assemblies.

The protein localises to the cell membrane. It is found in the membrane raft. Its function is as follows. Part of the ABC transporter complex OppABCDF involved in the uptake of oligopeptides. Plays an important nutritional role. Binds peptides containing up to five amino acids residues regardless of their sequence, with highest affinity for tetra- and pentapeptides. Binds to the sporulation-promoting peptide PhrE (Ser-Arg-Asn-Val-Thr). Required for sporulation and genetic competence. The chain is Oligopeptide-binding protein OppA from Bacillus subtilis (strain 168).